A 437-amino-acid chain; its full sequence is Trigger factor (437 aa).

Residues 164–249 form the PPIase FKBP-type domain; sequence GDFAKFDFEG…LHEIQCKKIG (86 aa).

This sequence belongs to the FKBP-type PPIase family. Tig subfamily.

The protein localises to the cytoplasm. It carries out the reaction [protein]-peptidylproline (omega=180) = [protein]-peptidylproline (omega=0). Its function is as follows. Involved in protein export. Acts as a chaperone by maintaining the newly synthesized protein in an open conformation. Functions as a peptidyl-prolyl cis-trans isomerase. The protein is Trigger factor of Campylobacter hominis (strain ATCC BAA-381 / DSM 21671 / CCUG 45161 / LMG 19568 / NCTC 13146 / CH001A).